Reading from the N-terminus, the 292-residue chain is Diaminopimelate epimerase (292 aa).

3 residues coordinate substrate: N13, Q46, and N66. Residue C75 is the Proton donor of the active site. Residues 76–77, N166, N199, and 217–218 each bind substrate; these read GN and ER. C226 (proton acceptor) is an active-site residue. Position 227–228 (227–228) interacts with substrate; that stretch reads GT.

This sequence belongs to the diaminopimelate epimerase family. Homodimer.

It is found in the cytoplasm. It catalyses the reaction (2S,6S)-2,6-diaminopimelate = meso-2,6-diaminopimelate. Its pathway is amino-acid biosynthesis; L-lysine biosynthesis via DAP pathway; DL-2,6-diaminopimelate from LL-2,6-diaminopimelate: step 1/1. Functionally, catalyzes the stereoinversion of LL-2,6-diaminopimelate (L,L-DAP) to meso-diaminopimelate (meso-DAP), a precursor of L-lysine and an essential component of the bacterial peptidoglycan. The protein is Diaminopimelate epimerase of Ralstonia pickettii (strain 12J).